Reading from the N-terminus, the 255-residue chain is 1-(5-phosphoribosyl)-5-[(5-phosphoribosylamino)methylideneamino] imidazole-4-carboxamide isomerase (255 aa).

Residue D8 is the Proton acceptor of the active site. The active-site Proton donor is the D129.

This sequence belongs to the HisA/HisF family.

It localises to the cytoplasm. It catalyses the reaction 1-(5-phospho-beta-D-ribosyl)-5-[(5-phospho-beta-D-ribosylamino)methylideneamino]imidazole-4-carboxamide = 5-[(5-phospho-1-deoxy-D-ribulos-1-ylimino)methylamino]-1-(5-phospho-beta-D-ribosyl)imidazole-4-carboxamide. It functions in the pathway amino-acid biosynthesis; L-histidine biosynthesis; L-histidine from 5-phospho-alpha-D-ribose 1-diphosphate: step 4/9. The protein is 1-(5-phosphoribosyl)-5-[(5-phosphoribosylamino)methylideneamino] imidazole-4-carboxamide isomerase of Prochlorococcus marinus (strain MIT 9301).